Consider the following 770-residue polypeptide: Probable zinc transporter protein DDB_G0291141 (770 aa).

The Cytoplasmic portion of the chain corresponds to 1–36; sequence MAGSLDDSIYNNGRSGGGGGGFKFSKGFNKDSISKR. Residues 37–57 traverse the membrane as a helical segment; it reads IIMMLFFSKGIRAWSCIILLY. Residues 58-62 lie on the Extracellular side of the membrane; it reads FLQSS. The chain crosses the membrane as a helical span at residues 63 to 83; the sequence is ISIISASFYMCLFSAIFSVVV. The Cytoplasmic segment spans residues 84–100; that stretch reads EKPWNLLSSLRPSQIKK. Residues 101–117 traverse the membrane as a helical segment; that stretch reads IIYHSIFNLLIIITWNS. Residues 118–123 are Extracellular-facing; the sequence is SIKFIG. The chain crosses the membrane as a helical span at residues 124–146; sequence PIGSILASDYTFSTYPLIFNSLL. Topologically, residues 147-154 are cytoplasmic; the sequence is QGNFLATD. A helical membrane pass occupies residues 155-175; sequence MSRGSIMLMIGYFLIPLFGIS. Residues 176–184 are Extracellular-facing; the sequence is NRLDILGYT. The helical transmembrane segment at 185-205 threads the bilayer; sequence SSQVFMIGLFSLIVHNVLVLW. Residues 206–224 are Cytoplasmic-facing; sequence KKTIVRSWNSGSSGGKNKL. The helical transmembrane segment at 225–245 threads the bilayer; it reads SSLGSCVSTIILFVFKLFEGF. Residues 246 to 262 are Extracellular-facing; the sequence is SSGSSGSDSINQVSYSQ. A helical transmembrane segment spans residues 263-283; that stretch reads LFVIAIITFILYSLNQFIDDV. Residues 284 to 291 are Cytoplasmic-facing; it reads SEKELTFN. Residues 292 to 312 traverse the membrane as a helical segment; sequence VLSKVSLTSSVIFGLLAALFI. Topologically, residues 313–316 are extracellular; sequence GFKD. The helical transmembrane segment at 317–337 threads the bilayer; it reads FFHPILILSFIFIINAIHILY. The Cytoplasmic portion of the chain corresponds to 338–404; the sequence is SKSNDIQPMT…QIVDKPTSRR (67 aa). The chain crosses the membrane as a helical span at residues 405–425; it reads IFTFLVINLMFMFVEMAYGIW. Residues 426–434 are Extracellular-facing; the sequence is TNSLGLITD. Residues 435–455 form a helical membrane-spanning segment; that stretch reads ACHMFFDATALFIALVAEVIS. Over 456–469 the chain is Cytoplasmic; that stretch reads QWKQNDKYSYGYGR. A helical transmembrane segment spans residues 470–490; it reads FQVLSGFVNGIFLIFIAVTIL. Residues 491–507 are Extracellular-facing; that stretch reads MESVERLLEPPEINTDK. Residues 508–528 traverse the membrane as a helical segment; sequence LLLVSVLGFIINLIGIFSFHG. Over 529–592 the chain is Cytoplasmic; it reads DHGHSHGGGG…GVFLHLLADT (64 aa). The segment at 532–566 is disordered; that stretch reads HSHGGGGGHSHGGGEKKEKHHGHSHGGHGDHQQVT. The helical transmembrane segment at 593–613 threads the bilayer; the sequence is LGSVGVIVSSLIIQIWGYTLA. A topological domain (extracellular) is located at residue Asp-614. Residues 615 to 635 form a helical membrane-spanning segment; sequence PICSLLISILIFLSVLPLIAN. Topologically, residues 636 to 770 are cytoplasmic; it reads TAKTLLQCTP…SSSSHHHRHN (135 aa). The segment at 751–770 is disordered; sequence DIHHNHSSSSSSSSHHHRHN.

It belongs to the cation diffusion facilitator (CDF) transporter (TC 2.A.4) family. SLC30A subfamily.

The protein localises to the membrane. Functionally, may be involved in zinc transport from the cytoplasm to either intracellular organelles or extracellular spaces. In Dictyostelium discoideum (Social amoeba), this protein is Probable zinc transporter protein DDB_G0291141.